We begin with the raw amino-acid sequence, 613 residues long: Transcription factor cbf11 (613 aa).

The tract at residues 32–58 is disordered; the sequence is NNGLHNQEDGAGGRNENSERVGSGSPG.

The protein belongs to the Su(H) family.

It localises to the cytoplasm. The protein resides in the nucleus. Functionally, transcription factor that behaves as a negative regulator of adhesion. Recognizes specifically the canonical CSL response element GTGA/GGAA. May also play a cbf12-antagonistic role in the regulation of a number of other important processes such as extracellular material production, colony morphogenesis, ploidy maintenance, or meiosis. The protein is Transcription factor cbf11 (cbf11) of Schizosaccharomyces pombe (strain 972 / ATCC 24843) (Fission yeast).